The primary structure comprises 261 residues: Gap junction beta-6 protein (261 aa).

The Cytoplasmic portion of the chain corresponds to 1-22 (MDWGTLHTFVGGVNKHSTSIGK). The chain crosses the membrane as a helical span at residues 23–45 (VWVTVLFVFRVMILVVAAQEVWG). At 46 to 75 (DEQEDFVCNTLQPGCRNVCYDHFFPVSHIR) the chain is on the extracellular side. The helical transmembrane segment at 76–98 (LWALQLIFVSTPALLVAMHVAYY) threads the bilayer. Residues 99-131 (RHEAARRFRRGETRSEFKDLEDIKRQKVRIEGS) are Cytoplasmic-facing. A helical membrane pass occupies residues 132-154 (LWWTYTSSIFFRIVFEAAFMYVF). The Extracellular portion of the chain corresponds to 155-192 (YFLYNGYHLPWVLKCGIQPCPNLVDCFISRPTEKTVFT). The chain crosses the membrane as a helical span at residues 193-215 (IFMISASVICMLLNVAELCYLLL). Over 216-261 (KVCFRRSKRAQTQKAPPNHALKESKQNEMNELISEGGQNAITGFPS) the chain is Cytoplasmic.

This sequence belongs to the connexin family. Beta-type (group I) subfamily. In terms of assembly, a connexon is composed of a hexamer of connexins. Interacts with CNST.

The protein localises to the cell membrane. The protein resides in the cell junction. It is found in the gap junction. In terms of biological role, one gap junction consists of a cluster of closely packed pairs of transmembrane channels, the connexons, through which materials of low MW diffuse from one cell to a neighboring cell. This chain is Gap junction beta-6 protein (GJB6), found in Bos taurus (Bovine).